The sequence spans 1593 residues: Autotransporter CRAC (1593 aa).

The N-terminal stretch at 1–54 (MNKVYNTVWNESTGMWVVTSELTRKGGRRPRQIRRTALAGLIAGLLLPSAPALA) is a signal peptide. Polar residues predominate over residues 65–85 (GATSSSMSLNAGDTATDTTIN). Disordered regions lie at residues 65–100 (GATS…SATS) and 1267–1286 (KADS…PVPP). Residues 86 to 97 (SGGSQRVSSGGS) are compositionally biased toward low complexity. Polar residues predominate over residues 1269–1280 (DSSQPGTDNPGT). Residues 1325–1593 (NTRSPGGVWG…TGSVGFRINF (269 aa)) enclose the Autotransporter domain.

Post-translationally, glycosylated by heptosyltransferas BAHTCr. Glycosylation is required for adhesion to mammalian cells and colonization of the mouse host gastrointestinal tract.

It is found in the cell outer membrane. Autotransporter required for the colonization of the mouse host gastrointestinal tract, possibly by mediating bacteria adhesion to host cells. This is Autotransporter CRAC from Citrobacter rodentium (strain ICC168) (Citrobacter freundii biotype 4280).